Reading from the N-terminus, the 517-residue chain is Probable G-protein coupled receptor Mth-like 4 (517 aa).

An N-terminal signal peptide occupies residues 1–18 (MRILLIAVLFLLMPKSNA). Residues 19 to 212 (EIPGCDFFDT…LSSEHSRTWK (194 aa)) lie on the Extracellular side of the membrane. 5 cysteine pairs are disulfide-bonded: Cys-23-Cys-77, Cys-79-Cys-84, Cys-88-Cys-183, Cys-89-Cys-100, and Cys-145-Cys-201. Residue Asn-39 is glycosylated (N-linked (GlcNAc...) asparagine). Asn-117 and Asn-165 each carry an N-linked (GlcNAc...) asparagine glycan. The chain crosses the membrane as a helical span at residues 213 to 233 (TVAIVISLICIILTISVYLYV). The Cytoplasmic segment spans residues 234–242 (EKLRNLHGK). The chain crosses the membrane as a helical span at residues 243–263 (CFICYLASLFLGYFFLVLNVW). At 264-272 (KYSSGFCVT) the chain is on the extracellular side. A helical membrane pass occupies residues 273-293 (AGFLGYFSVMAAFFWLSVIGI). The Cytoplasmic portion of the chain corresponds to 294–319 (HLRIKFSLASNCLHRLLPENPFRAYN). A helical transmembrane segment spans residues 320-340 (LYAWGIPLIMTAITYTADQVV). Residues 341–363 (KNEKLRPRVGVGKNCWIYTGDMT) lie on the Extracellular side of the membrane. A helical membrane pass occupies residues 364-384 (VMIYFYGPMLLLIAFNIIMFV). The Cytoplasmic segment spans residues 385–414 (LSAIYIYNIKKNVKGLVHKQQTNQQINDQQ). The helical transmembrane segment at 415–435 (MFAIFLRLFILMGLSWSFEIL) threads the bilayer. Residues 436-459 (SFLLTKQQAWARALMVADYFNWSQ) lie on the Extracellular side of the membrane. N-linked (GlcNAc...) asparagine glycosylation is present at Asn-456. Residues 460–480 (GTIIFVLFILKPSILKLIIAG) traverse the membrane as a helical segment. Over 481 to 517 (GRQNLPGSHHNSRSKAARYNSTHTACEGSIADPNAYC) the chain is Cytoplasmic.

Belongs to the G-protein coupled receptor 2 family. Mth subfamily.

It localises to the cell membrane. The protein is Probable G-protein coupled receptor Mth-like 4 (mthl4) of Drosophila melanogaster (Fruit fly).